The chain runs to 146 residues: Heat-stable 19 kDa antigen (146 aa).

The signal sequence occupies residues 1–20; sequence MKFSLLSAIAAAVFVPFTSA.

The protein belongs to the cerato-platanin family. Post-translationally, glycosylated.

Its subcellular location is the secreted. This is Heat-stable 19 kDa antigen (CSA) from Coccidioides immitis (strain RS) (Valley fever fungus).